The primary structure comprises 199 residues: Interleukin-11 (199 aa).

Positions 1–21 are cleaved as a signal peptide; that stretch reads MNCVCRLVLVVLSLWPDRVVA. Residues 182–190 form an important for interaction with IL11RA and for the stimulation of cell proliferation region; the sequence is HLTLDWAVR.

Belongs to the IL-6 superfamily. As to quaternary structure, interacts with either IL11RA1 or IL11RA2 to associate with IL6ST, giving rise to a multimeric signaling complex.

The protein resides in the secreted. Cytokine that stimulates the proliferation of hematopoietic stem cells and megakaryocyte progenitor cells and induces megakaryocyte maturation resulting in increased platelet production. Also promotes the proliferation of hepatocytes in response to liver damage. Binding to its receptor formed by IL6ST and either IL11RA1 or IL11RA2 activates a signaling cascade that promotes cell proliferation, also in the context of various cancers. Signaling leads to the activation of intracellular protein kinases and the phosphorylation of STAT3. The interaction with the membrane-bound IL11RA and IL6ST stimulates 'classic signaling', whereas the binding of IL11 and soluble IL11RA to IL6ST stimulates 'trans-signaling'. This chain is Interleukin-11, found in Mus musculus (Mouse).